Here is a 72-residue protein sequence, read N- to C-terminus: Translation initiation factor IF-1 (72 aa).

The region spanning 1 to 72 (MSKSDIIEMQ…TRGRITWRAK (72 aa)) is the S1-like domain.

The protein belongs to the IF-1 family. In terms of assembly, component of the 30S ribosomal translation pre-initiation complex which assembles on the 30S ribosome in the order IF-2 and IF-3, IF-1 and N-formylmethionyl-tRNA(fMet); mRNA recruitment can occur at any time during PIC assembly.

The protein localises to the cytoplasm. In terms of biological role, one of the essential components for the initiation of protein synthesis. Stabilizes the binding of IF-2 and IF-3 on the 30S subunit to which N-formylmethionyl-tRNA(fMet) subsequently binds. Helps modulate mRNA selection, yielding the 30S pre-initiation complex (PIC). Upon addition of the 50S ribosomal subunit IF-1, IF-2 and IF-3 are released leaving the mature 70S translation initiation complex. This chain is Translation initiation factor IF-1, found in Clostridium perfringens (strain 13 / Type A).